The following is a 387-amino-acid chain: Mannitol-1-phosphate 5-dehydrogenase (387 aa).

3 to 14 provides a ligand contact to NAD(+); sequence ALHFGAGNIGRG.

It belongs to the mannitol dehydrogenase family.

It catalyses the reaction D-mannitol 1-phosphate + NAD(+) = beta-D-fructose 6-phosphate + NADH + H(+). The sequence is that of Mannitol-1-phosphate 5-dehydrogenase from Yersinia pseudotuberculosis serotype O:3 (strain YPIII).